A 614-amino-acid chain; its full sequence is Probable glutamate--tRNA ligase, cytoplasmic (614 aa).

Arg130–Ala132 is an L-glutamate binding site. A 'HIGH' region motif is present at residues Pro135–Leu144. ATP is bound at residue His140. L-glutamate is bound by residues Asp166, Tyr303–Cys307, and Arg321. Residues Glu324 and Val359–Arg363 contribute to the ATP site. The short motif at Val359 to Arg363 is the 'KMSKS' region element.

This sequence belongs to the class-I aminoacyl-tRNA synthetase family. Glutamate--tRNA ligase type 2 subfamily.

The protein localises to the cytoplasm. It catalyses the reaction tRNA(Glu) + L-glutamate + ATP = L-glutamyl-tRNA(Glu) + AMP + diphosphate. This chain is Probable glutamate--tRNA ligase, cytoplasmic, found in Vairimorpha ceranae (strain BRL01) (Microsporidian parasite).